Reading from the N-terminus, the 142-residue chain is Photosystem II extrinsic protein U (142 aa).

Residues M1–A28 form the signal peptide.

The protein belongs to the PsbU family. As to quaternary structure, PSII is composed of 1 copy each of membrane proteins PsbA, PsbB, PsbC, PsbD, PsbE, PsbF, PsbH, PsbI, PsbJ, PsbK, PsbL, PsbM, PsbT, PsbX, PsbY, PsbZ, Psb30/Ycf12, peripheral proteins PsbO, CyanoQ (PsbQ), PsbU, PsbV and a large number of cofactors. It forms dimeric complexes.

Its subcellular location is the cellular thylakoid membrane. Its function is as follows. One of the extrinsic, lumenal subunits of photosystem II (PSII). PSII is a light-driven water plastoquinone oxidoreductase, using light energy to abstract electrons from H(2)O, generating a proton gradient subsequently used for ATP formation. The extrinsic proteins stabilize the structure of photosystem II oxygen-evolving complex (OEC), the ion environment of oxygen evolution and protect the OEC against heat-induced inactivation. The chain is Photosystem II extrinsic protein U from Trichodesmium erythraeum (strain IMS101).